The primary structure comprises 134 residues: Small ribosomal subunit protein uS8c (134 aa).

Belongs to the universal ribosomal protein uS8 family. In terms of assembly, part of the 30S ribosomal subunit.

The protein localises to the plastid. Its subcellular location is the chloroplast. One of the primary rRNA binding proteins, it binds directly to 16S rRNA central domain where it helps coordinate assembly of the platform of the 30S subunit. The sequence is that of Small ribosomal subunit protein uS8c (rps8) from Ipomoea purpurea (Common morning glory).